A 371-amino-acid polypeptide reads, in one-letter code: GDP-mannose 3,5-epimerase 2 (371 aa).

Residues 29–55 (GAGG…SDWK), Asp-53, and Asp-73 contribute to the NAD(+) site. Substrate-binding positions include Gly-98 and 138–140 (SAC). 2 residues coordinate NAD(+): Tyr-168 and Lys-172. Residue Tyr-168 is the Proton acceptor of the active site. Substrate-binding positions include Asn-197, 210–212 (EKA), Lys-219, 235–237 (QTR), Arg-300, and Ser-350.

Belongs to the NAD(P)-dependent epimerase/dehydratase family. NAD(+) is required as a cofactor.

The catalysed reaction is GDP-alpha-D-mannose = GDP-beta-L-gulose. The enzyme catalyses GDP-beta-L-gulose = GDP-beta-L-galactose. It functions in the pathway cofactor biosynthesis; L-ascorbate biosynthesis via GDP-alpha-D-mannose pathway; L-ascorbate from GDP-alpha-D-mannose: step 1/5. Its function is as follows. Catalyzes a reversible epimerization of GDP-D-mannose that precedes the committed step in the biosynthesis of vitamin C (L-ascorbate), resulting in the hydrolysis of the highly energetic glycosyl-pyrophosphoryl linkage. Able to catalyze 2 distinct epimerization reactions and can release both GDP-L-galactose and GDP-L-gulose from GDP-mannose. In Oryza sativa subsp. japonica (Rice), this protein is GDP-mannose 3,5-epimerase 2 (GME-2).